The primary structure comprises 312 residues: Serpentine receptor class gamma-31 (312 aa).

Helical transmembrane passes span 6-26, 38-58, 92-112, 132-152, 180-200, 218-238, and 259-279; these read LITQFIYGTISTIIYSLTVVF, FLKLYICQFFFNMWMYWNFYI, FIFCQYHLGFMSYSNLFLTSI, TYILIALIFITPILFTYPLLV, FILVWMVVTVLLSIIANIICW, LFLVSFVTFVINCGVFSIAML, and LLSPFANDLLSLSTPYVLIIF.

This sequence belongs to the nematode receptor-like protein srg family.

The protein localises to the membrane. This chain is Serpentine receptor class gamma-31 (srg-31), found in Caenorhabditis elegans.